The primary structure comprises 373 residues: Geraniol dehydrogenase (373 aa).

Residues Cys-47, His-67, Cys-96, Cys-99, Cys-102, Cys-110, and Cys-175 each coordinate Zn(2+).

It belongs to the zinc-containing alcohol dehydrogenase family. As to quaternary structure, homodimer. Requires Zn(2+) as cofactor.

It catalyses the reaction (2E)-geraniol + NAD(+) = (2E)-geranial + NADH + H(+). It carries out the reaction perillyl alcohol + NAD(+) = perillyl aldehyde + NADH + H(+). The protein operates within terpene metabolism; monoterpene degradation. Is inhibited by EDTA, N-ethylmaleimide, diethylpyrocarbonate, and 1-cyclohexyl-N-(2-morpholinoethyl)carbodiimide in vitro. Involved in the degradation of the monoterpenes beta-myrcene and limonene. During anaerobic degradation of beta-myrcene, catalyzes the NAD(+)-dependent oxidation of geraniol to geranial. Can also catalyze the oxidation of (S)-perillyl alcohol to perillyl aldehyde, and to a lesser extent, the oxidation of nerol, citronellol, cumic alcohol, and benzyl alcohol. Cannot use NADP(+) instead of NAD(+) as cosubstrate. In Castellaniella defragrans (strain DSM 12143 / CCUG 39792 / 65Phen) (Alcaligenes defragrans), this protein is Geraniol dehydrogenase.